A 220-amino-acid polypeptide reads, in one-letter code: Large ribosomal subunit protein uL3 (220 aa).

This sequence belongs to the universal ribosomal protein uL3 family. In terms of assembly, part of the 50S ribosomal subunit. Forms a cluster with proteins L14 and L19.

One of the primary rRNA binding proteins, it binds directly near the 3'-end of the 23S rRNA, where it nucleates assembly of the 50S subunit. The sequence is that of Large ribosomal subunit protein uL3 from Staphylococcus carnosus (strain TM300).